We begin with the raw amino-acid sequence, 92 residues long: MTEKRVHIIVSGLVQGVGFRMFVLREASARSLSGWTRNLPDGTVEVEAQGDSGRVDELIRQIRIGPSRSSVTSIKVKEIEVDTSCREFRILT.

Positions 5–92 constitute an Acylphosphatase-like domain; the sequence is RVHIIVSGLV…TSCREFRILT (88 aa). Active-site residues include R20 and N38.

Belongs to the acylphosphatase family.

The enzyme catalyses an acyl phosphate + H2O = a carboxylate + phosphate + H(+). This Chlorobaculum tepidum (strain ATCC 49652 / DSM 12025 / NBRC 103806 / TLS) (Chlorobium tepidum) protein is Acylphosphatase (acyP).